A 376-amino-acid chain; its full sequence is N-acetyldiaminopimelate deacetylase (376 aa).

Asp-69 is a catalytic residue. Glu-128 (proton acceptor) is an active-site residue.

This sequence belongs to the peptidase M20A family. N-acetyldiaminopimelate deacetylase subfamily.

It catalyses the reaction N-acetyl-(2S,6S)-2,6-diaminopimelate + H2O = (2S,6S)-2,6-diaminopimelate + acetate. It functions in the pathway amino-acid biosynthesis; L-lysine biosynthesis via DAP pathway; LL-2,6-diaminopimelate from (S)-tetrahydrodipicolinate (acetylase route): step 3/3. In terms of biological role, catalyzes the conversion of N-acetyl-diaminopimelate to diaminopimelate and acetate. This chain is N-acetyldiaminopimelate deacetylase, found in Streptococcus pneumoniae serotype 19F (strain G54).